A 258-amino-acid chain; its full sequence is Uroplakin-1a (258 aa).

At 1 to 14 (MASAAAATTEKGSP) the chain is on the cytoplasmic side. The chain crosses the membrane as a helical span at residues 15 to 35 (VVVGLLVMGNIIILLSGLALF). Residues 36–59 (AETVWVTADQYRIYPLMGVSGKDD) are Extracellular-facing. Residues 60-86 (VFAGAWIAIFCGFSFFVVASFGVGAAL) form a helical membrane-spanning segment. Over 87-91 (CRRRS) the chain is Cytoplasmic. The chain crosses the membrane as a helical span at residues 92–112 (MILTYLILMLIIYIFECASCI). At 113-230 (TSYTHRDYMV…HIGHAIDSYT (118 aa)) the chain is on the extracellular side. N-linked (GlcNAc...) asparagine glycosylation is present at N170. A helical transmembrane segment spans residues 231–252 (WGISWFGFAILMWTLPVMLIAM). Topologically, residues 253 to 258 (YFYTTL) are cytoplasmic.

This sequence belongs to the tetraspanin (TM4SF) family. Homodimer; disulfide-linked. Interacts with uroplakin-2 (UPK2). In terms of processing, the N-terminus is blocked. Post-translationally, N-glycosylated with high-mannose oligosaccharides. In terms of tissue distribution, bladder epithelium.

It localises to the membrane. Component of the asymmetric unit membrane (AUM); a highly specialized biomembrane elaborated by terminally differentiated urothelial cells. May play an important role in normal bladder epithelial physiology, possibly in regulating membrane permeability of superficial umbrella cells or in stabilizing the apical membrane through AUM/cytoskeletal interactions. This Bos taurus (Bovine) protein is Uroplakin-1a (UPK1A).